The primary structure comprises 294 residues: N-acetylmuramic acid 6-phosphate etherase (294 aa).

Residues Thr-54–Lys-217 form the SIS domain. Glu-82 serves as the catalytic Proton donor. Glu-113 is a catalytic residue.

This sequence belongs to the GCKR-like family. MurNAc-6-P etherase subfamily. In terms of assembly, homodimer.

The catalysed reaction is N-acetyl-D-muramate 6-phosphate + H2O = N-acetyl-D-glucosamine 6-phosphate + (R)-lactate. It participates in amino-sugar metabolism; N-acetylmuramate degradation. Specifically catalyzes the cleavage of the D-lactyl ether substituent of MurNAc 6-phosphate, producing GlcNAc 6-phosphate and D-lactate. This is N-acetylmuramic acid 6-phosphate etherase from Oceanobacillus iheyensis (strain DSM 14371 / CIP 107618 / JCM 11309 / KCTC 3954 / HTE831).